Reading from the N-terminus, the 217-residue chain is Glycerol-3-phosphate acyltransferase (217 aa).

5 consecutive transmembrane segments (helical) span residues 1-21, 54-74, 84-104, 126-146, and 165-185; these read MAWA…SIPT, TAAI…VGGV, AIVP…AAIL, VLLV…LFML, and LLML…LAGI.

It belongs to the PlsY family. Probably interacts with PlsX.

The protein localises to the cell inner membrane. The catalysed reaction is an acyl phosphate + sn-glycerol 3-phosphate = a 1-acyl-sn-glycero-3-phosphate + phosphate. The protein operates within lipid metabolism; phospholipid metabolism. In terms of biological role, catalyzes the transfer of an acyl group from acyl-phosphate (acyl-PO(4)) to glycerol-3-phosphate (G3P) to form lysophosphatidic acid (LPA). This enzyme utilizes acyl-phosphate as fatty acyl donor, but not acyl-CoA or acyl-ACP. The polypeptide is Glycerol-3-phosphate acyltransferase (Rippkaea orientalis (strain PCC 8801 / RF-1) (Cyanothece sp. (strain PCC 8801))).